Reading from the N-terminus, the 488-residue chain is H2.0-like homeobox protein (488 aa).

Disordered stretches follow at residues 118-173 and 331-488; these read AYHH…SSKD and WRHS…LGCL. Composition is skewed to low complexity over residues 125–135 and 158–171; these read QQQQQQQQPQQ and PNPH…APSS. Residues 276-335 constitute a DNA-binding region (homeobox); it reads RSWSRAVFSNLQRKGLEKRFEIQKYVTKPDRKQLAAMLGLTDAQVKVWFQNRRMKWRHSK. Basic and acidic residues-rich tracts occupy residues 334 to 349 and 363 to 372; these read SKEA…EAGE and DERSPSRSEG. Over residues 373-383 the composition is skewed to acidic residues; that stretch reads EAESESSDSES. Basic and acidic residues predominate over residues 390 to 401; sequence DTERTEGSERSL. Over residues 422-432 the composition is skewed to gly residues; the sequence is GSGGSSGGGGN. Residues 433–454 show a composition bias toward low complexity; sequence SFSFSSASSLSSSSTSAGCASS.

Belongs to the H2.0 homeobox family. Low level in normal B and T-cells, high level in activated lymphocytes and monocytes. Also found in thymus, tonsil, bone marrow, developing vessels, and fetal brain.

It localises to the nucleus. Transcription factor required for TBX21/T-bet-dependent maturation of Th1 cells as well as maintenance of Th1-specific gene expression. Involved in embryogenesis and hematopoiesis. The sequence is that of H2.0-like homeobox protein (HLX) from Homo sapiens (Human).